Consider the following 113-residue polypeptide: MKYIAAYALLVLGGNSSPSADDVKKVLKSVGVDSEQDKLDALLKNLEGKQLHELIEAGSSKVSSLSAGAGPSGGAAAAGADAGAAEAEKEEEPQEEEADVNMGDIFGGDDEDY.

A disordered region spans residues 60–113; sequence SKVSSLSAGAGPSGGAAAAGADAGAAEAEKEEEPQEEEADVNMGDIFGGDDEDY. A compositionally biased stretch (low complexity) spans 74–85; sequence GAAAAGADAGAA. The span at 88-99 shows a compositional bias: acidic residues; that stretch reads EKEEEPQEEEAD.

The protein belongs to the eukaryotic ribosomal protein P1/P2 family. In terms of assembly, P1 and P2 exist as dimers at the large ribosomal subunit. Phosphorylated.

Its function is as follows. Plays an important role in the elongation step of protein synthesis. In Euplotes raikovi, this protein is Large ribosomal subunit protein P2.